The following is a 445-amino-acid chain: UPF0210 protein STK_02450 (445 aa).

This sequence belongs to the UPF0210 family.

In Sulfurisphaera tokodaii (strain DSM 16993 / JCM 10545 / NBRC 100140 / 7) (Sulfolobus tokodaii), this protein is UPF0210 protein STK_02450.